Here is a 611-residue protein sequence, read N- to C-terminus: Pseudomonine synthase PmsE (611 aa).

The 76-residue stretch at valine 533–glutamine 608 folds into the Carrier domain. Serine 569 bears the O-(pantetheine 4'-phosphoryl)serine mark.

This sequence belongs to the ATP-dependent AMP-binding enzyme family. Pantetheine 4'-phosphate serves as cofactor.

The catalysed reaction is salicylate + holo-[ACP] + ATP = salicyl-[ACP] + AMP + diphosphate. The protein operates within siderophore biosynthesis; pseudomonine biosynthesis. Its function is as follows. Involved in the biosynthesis of the siderophore pseudomonine. Specifically adenylates salicylate and loads it onto its peptidyl carrier domain, via a thioester linkage to the phosphopanthetheine moiety. The protein is Pseudomonine synthase PmsE of Pseudomonas entomophila (strain L48).